The sequence spans 758 residues: 5-methyltetrahydropteroyltriglutamate--homocysteine methyltransferase (758 aa).

5-methyltetrahydropteroyltri-L-glutamate is bound by residues 17–20 (RELK) and Lys-117. L-homocysteine is bound by residues 434–436 (IGS) and Glu-487. L-methionine contacts are provided by residues 434-436 (IGS) and Glu-487. Residues 518 to 519 (RC) and Trp-564 contribute to the 5-methyltetrahydropteroyltri-L-glutamate site. Asp-602 is an L-homocysteine binding site. Asp-602 contacts L-methionine. Residue Glu-608 coordinates 5-methyltetrahydropteroyltri-L-glutamate. His-644, Cys-646, and Glu-668 together coordinate Zn(2+). The Proton donor role is filled by His-697. Residue Cys-729 participates in Zn(2+) binding.

This sequence belongs to the vitamin-B12 independent methionine synthase family. It depends on Zn(2+) as a cofactor.

The catalysed reaction is 5-methyltetrahydropteroyltri-L-glutamate + L-homocysteine = tetrahydropteroyltri-L-glutamate + L-methionine. It participates in amino-acid biosynthesis; L-methionine biosynthesis via de novo pathway; L-methionine from L-homocysteine (MetE route): step 1/1. Functionally, catalyzes the transfer of a methyl group from 5-methyltetrahydrofolate to homocysteine resulting in methionine formation. The chain is 5-methyltetrahydropteroyltriglutamate--homocysteine methyltransferase from Yersinia pseudotuberculosis serotype I (strain IP32953).